We begin with the raw amino-acid sequence, 238 residues long: Large ribosomal subunit protein uL1 (238 aa).

It belongs to the universal ribosomal protein uL1 family. Part of the 50S ribosomal subunit.

Binds directly to 23S rRNA. The L1 stalk is quite mobile in the ribosome, and is involved in E site tRNA release. Functionally, protein L1 is also a translational repressor protein, it controls the translation of the L11 operon by binding to its mRNA. The chain is Large ribosomal subunit protein uL1 from Gloeobacter violaceus (strain ATCC 29082 / PCC 7421).